Here is a 251-residue protein sequence, read N- to C-terminus: 5-oxoprolinase subunit A (251 aa).

This sequence belongs to the LamB/PxpA family. In terms of assembly, forms a complex composed of PxpA, PxpB and PxpC.

It carries out the reaction 5-oxo-L-proline + ATP + 2 H2O = L-glutamate + ADP + phosphate + H(+). Its function is as follows. Catalyzes the cleavage of 5-oxoproline to form L-glutamate coupled to the hydrolysis of ATP to ADP and inorganic phosphate. This chain is 5-oxoprolinase subunit A, found in Paracidovorax citrulli (strain AAC00-1) (Acidovorax citrulli).